Here is a 437-residue protein sequence, read N- to C-terminus: MAEPGTYGRSSLVQVDCRVHELLLRQRRQERTMLKLIASENFASSAVLEATGSIFANKYAEGYPGARYYAGNEIVDELETLAIERLKALFGSEHANVQPYSGSPANQAVYRALLSPRDKVMGLPLPEGGHLTHGWSVNFSGTDYQRVPYGLHDKTQQIDYDRLRETARRERPKLIWVGGTSYPRVFDYAAMAEIALEANSYLVADIAHISGLIVAGAHPNPVVHCDVVTSTSHKSIRGPRGGFILSKNEDRYQALYHSTSKHNLAKRIDRAVFPQLQGGPHMNTIAALAVALQEAATPSFRTYGHQIVKNAKALAEALLGRGYYLVTGGTDNHMLILDLRDRPLSGKAYAERLARAGIITNFDMVPGDPRDPTVTSGIRLGSPAVTSMGMREAEMVQIAAFIDSVCRQPDDQEVHASVRRDVADFCTAFDVPGISDR.

(6S)-5,6,7,8-tetrahydrofolate contacts are provided by residues L125 and 129–131; that span reads GHL. K234 carries the N6-(pyridoxal phosphate)lysine modification.

It belongs to the SHMT family. Homodimer. It depends on pyridoxal 5'-phosphate as a cofactor.

It localises to the cytoplasm. The catalysed reaction is (6R)-5,10-methylene-5,6,7,8-tetrahydrofolate + glycine + H2O = (6S)-5,6,7,8-tetrahydrofolate + L-serine. The protein operates within one-carbon metabolism; tetrahydrofolate interconversion. It functions in the pathway amino-acid biosynthesis; glycine biosynthesis; glycine from L-serine: step 1/1. Functionally, catalyzes the reversible interconversion of serine and glycine with tetrahydrofolate (THF) serving as the one-carbon carrier. This reaction serves as the major source of one-carbon groups required for the biosynthesis of purines, thymidylate, methionine, and other important biomolecules. Also exhibits THF-independent aldolase activity toward beta-hydroxyamino acids, producing glycine and aldehydes, via a retro-aldol mechanism. The protein is Serine hydroxymethyltransferase 2 of Mesorhizobium japonicum (strain LMG 29417 / CECT 9101 / MAFF 303099) (Mesorhizobium loti (strain MAFF 303099)).